The sequence spans 296 residues: 33 kDa chaperonin (296 aa).

Disulfide bonds link C236-C238 and C269-C272.

This sequence belongs to the HSP33 family. Under oxidizing conditions two disulfide bonds are formed involving the reactive cysteines. Under reducing conditions zinc is bound to the reactive cysteines and the protein is inactive.

Its subcellular location is the cytoplasm. Functionally, redox regulated molecular chaperone. Protects both thermally unfolding and oxidatively damaged proteins from irreversible aggregation. Plays an important role in the bacterial defense system toward oxidative stress. This chain is 33 kDa chaperonin, found in Lactobacillus helveticus (strain DPC 4571).